Here is a 207-residue protein sequence, read N- to C-terminus: FMN-dependent NADH:quinone oxidoreductase (207 aa).

Ser10 is an FMN binding site.

It belongs to the azoreductase type 1 family. As to quaternary structure, homodimer. It depends on FMN as a cofactor.

It catalyses the reaction 2 a quinone + NADH + H(+) = 2 a 1,4-benzosemiquinone + NAD(+). It carries out the reaction N,N-dimethyl-1,4-phenylenediamine + anthranilate + 2 NAD(+) = 2-(4-dimethylaminophenyl)diazenylbenzoate + 2 NADH + 2 H(+). Functionally, quinone reductase that provides resistance to thiol-specific stress caused by electrophilic quinones. In terms of biological role, also exhibits azoreductase activity. Catalyzes the reductive cleavage of the azo bond in aromatic azo compounds to the corresponding amines. The chain is FMN-dependent NADH:quinone oxidoreductase from Shouchella clausii (strain KSM-K16) (Alkalihalobacillus clausii).